Consider the following 388-residue polypeptide: 4-hydroxy-3-methylbut-2-en-1-yl diphosphate synthase (flavodoxin) (388 aa).

Residues Cys280, Cys283, Cys315, and Glu322 each coordinate [4Fe-4S] cluster. Positions 369 to 388 (MNSEGGPEATSSGSPVVTVS) are disordered. The segment covering 377-388 (ATSSGSPVVTVS) has biased composition (polar residues).

This sequence belongs to the IspG family. [4Fe-4S] cluster serves as cofactor.

It catalyses the reaction (2E)-4-hydroxy-3-methylbut-2-enyl diphosphate + oxidized [flavodoxin] + H2O + 2 H(+) = 2-C-methyl-D-erythritol 2,4-cyclic diphosphate + reduced [flavodoxin]. It functions in the pathway isoprenoid biosynthesis; isopentenyl diphosphate biosynthesis via DXP pathway; isopentenyl diphosphate from 1-deoxy-D-xylulose 5-phosphate: step 5/6. In terms of biological role, converts 2C-methyl-D-erythritol 2,4-cyclodiphosphate (ME-2,4cPP) into 1-hydroxy-2-methyl-2-(E)-butenyl 4-diphosphate. The sequence is that of 4-hydroxy-3-methylbut-2-en-1-yl diphosphate synthase (flavodoxin) from Mycolicibacterium paratuberculosis (strain ATCC BAA-968 / K-10) (Mycobacterium paratuberculosis).